The following is a 456-amino-acid chain: Bifunctional protein GlmU (456 aa).

Residues 1–229 form a pyrophosphorylase region; it reads MLNVVILAAG…GWETLGVNSR (229 aa). UDP-N-acetyl-alpha-D-glucosamine-binding positions include 7–10, Lys21, Gln73, 78–79, 103–105, Gly139, Glu154, Asn169, and Asn227; these read LAAG, GT, and YGD. Asp105 lines the Mg(2+) pocket. Asn227 is a Mg(2+) binding site. The interval 230–250 is linker; that stretch reads VQQAELERRWQQEQARRQLEA. The N-acetyltransferase stretch occupies residues 251–456; the sequence is GVTLADPARF…EGWQRPQKKS (206 aa). 2 residues coordinate UDP-N-acetyl-alpha-D-glucosamine: Arg333 and Lys351. The active-site Proton acceptor is His363. The UDP-N-acetyl-alpha-D-glucosamine site is built by Tyr366 and Asn377. Acetyl-CoA contacts are provided by residues Ala380, 386-387, Ser405, Ala423, and Arg440; that span reads NY.

It in the N-terminal section; belongs to the N-acetylglucosamine-1-phosphate uridyltransferase family. In the C-terminal section; belongs to the transferase hexapeptide repeat family. In terms of assembly, homotrimer. Mg(2+) is required as a cofactor.

Its subcellular location is the cytoplasm. It carries out the reaction alpha-D-glucosamine 1-phosphate + acetyl-CoA = N-acetyl-alpha-D-glucosamine 1-phosphate + CoA + H(+). It catalyses the reaction N-acetyl-alpha-D-glucosamine 1-phosphate + UTP + H(+) = UDP-N-acetyl-alpha-D-glucosamine + diphosphate. It participates in nucleotide-sugar biosynthesis; UDP-N-acetyl-alpha-D-glucosamine biosynthesis; N-acetyl-alpha-D-glucosamine 1-phosphate from alpha-D-glucosamine 6-phosphate (route II): step 2/2. It functions in the pathway nucleotide-sugar biosynthesis; UDP-N-acetyl-alpha-D-glucosamine biosynthesis; UDP-N-acetyl-alpha-D-glucosamine from N-acetyl-alpha-D-glucosamine 1-phosphate: step 1/1. Its pathway is bacterial outer membrane biogenesis; LPS lipid A biosynthesis. Its function is as follows. Catalyzes the last two sequential reactions in the de novo biosynthetic pathway for UDP-N-acetylglucosamine (UDP-GlcNAc). The C-terminal domain catalyzes the transfer of acetyl group from acetyl coenzyme A to glucosamine-1-phosphate (GlcN-1-P) to produce N-acetylglucosamine-1-phosphate (GlcNAc-1-P), which is converted into UDP-GlcNAc by the transfer of uridine 5-monophosphate (from uridine 5-triphosphate), a reaction catalyzed by the N-terminal domain. In Bordetella petrii (strain ATCC BAA-461 / DSM 12804 / CCUG 43448), this protein is Bifunctional protein GlmU.